The sequence spans 483 residues: M protein, serotype 6 (483 aa).

The first 42 residues, 1–42 (MAKNNTNRHYSLRKLKKGTASVAVALSVIGAGLVVNTNEVSA), serve as a signal peptide directing secretion. Residues 54–171 (DKARELLNKY…IGTLKKTLDE (118 aa)) adopt a coiled-coil conformation. Tandem repeats lie at residues 69–75 (MLQANND), 76–82 (KLTTENN), 83–89 (NLTDQNK), 90–96 (NLTTENK), 97–103 (NLTDQNK), 104–110 (NLTTENK), 111–117 (NLTDQNK), and 118–124 (NLTTENK). A 10 X 7 AA approximate tandem repeats of [KMNR]-L-[TQ]-[TDA]-[ENQ]-N-[NDK] region spans residues 69-138 (MLQANNDKLT…EENRLTTENK (70 aa)). Positions 74–87 (NDKLTTENNNLTDQ) are enriched in polar residues. The segment at 74–157 (NDKLTTENNN…EEEAANKERE (84 aa)) is disordered. Residues 88–113 (NKNLTTENKNLTDQNKNLTTENKNLT) show a composition bias toward low complexity. 2 stretches are compositionally biased toward basic and acidic residues: residues 122 to 135 (ENKELKAEENRLTT) and 143 to 157 (KLSEAEEEAANKERE). The 9-1; approximate repeat unit spans residues 125–131 (ELKAEEN). Repeat copies occupy residues 132-138 (RLTTENK), 157-181 (ENKEAIGTLKKTLDETVKDKIAKEQ), 182-206 (ESKETIGTLKKTLDETVKDKIAKEQ), 207-231 (ESKETIGTLKKTLDETVKDKIAKEQ), and 232-256 (ESKETIGTLKKILDETVKDKIAREQ). The segment at 157 to 269 (ENKEAIGTLK…QDIGALKQEL (113 aa)) is 4.5 X 25 AA tandem repeats of E-[NS]-K-E-[TA]-I-G-T-L-K-K-[TI]-L-D-E-T-V-K-D-K-I-A-[KR]-E-Q. 2 disordered regions span residues 255 to 298 (EQKS…EAKK) and 314 to 345 (VKEEKQISDASRQGLRRDLDASREAKKQVEKA). The stretch at 257 to 269 (KSKQDIGALKQEL) is one 5-2; truncated repeat. Composition is skewed to basic and acidic residues over residues 268-298 (ELAKKDEGNKVSEASRKGLRRDLDASREAKK) and 328-345 (LRRDLDASREAKKQVEKA). 2 C repeats span residues 270–304 (AKKDEGNKVSEASRKGLRRDLDASREAKKQVEKDL) and 312–346 (DKVKEEKQISDASRQGLRRDLDASREAKKQVEKAL). A binding to CD46 region spans residues 279-347 (SEASRKGLRR…AKKQVEKALE (69 aa)). The two directly repeated 27 amino acid blocks separated by 15 amino acids stretch occupies residues 279-347 (SEASRKGLRR…AKKQVEKALE (69 aa)). Positions 280–408 (EASRKGLRRD…LAKLRAGKAS (129 aa)) form a coiled coil. Positions 348–411 (EANSKLAALE…LRAGKASDSQ (64 aa)) are hydrophilic. D repeat units lie at residues 379-384 (AKLEAE), 385-390 (AKALKE), 393-398 (AKQAEE), and 400-405 (AKLRAG). The tract at residues 400–455 (AKLRAGKASDSQTPDAKPGNKVVPGKGQAPQAGTKPNQNKAPMKETKRQLPSTGET) is disordered. The LPXTG sorting signal motif lies at 449-453 (LPSTG). A Pentaglycyl murein peptidoglycan amidated threonine modification is found at threonine 452. Positions 453–483 (GETANPFFTAAALTVMATAGVAAVVKRKEEN) are cleaved as a propeptide — removed by sortase.

It belongs to the M protein family.

It localises to the secreted. The protein localises to the cell wall. Mediates the attachment of S.pyogenes to skin epithelial cells through the binding of the human membrane cofactor protein CD46. Also binds to the factor H and factor H-like protein 1. These interactions could contribute to the fact that the M6 protein protects the bacterium from the phagocytosis by regulating the complement activation on the bacterial surface. In Streptococcus pyogenes, this protein is M protein, serotype 6 (emm6).